A 1985-amino-acid polypeptide reads, in one-letter code: Histone-lysine N-methyltransferase SETD1B (1985 aa).

Residues 1–11 (MENSHPHHHHQ) are compositionally biased toward basic residues. Positions 1 to 25 (MENSHPHHHHQQPPPQPGPSGERRN) are disordered. The segment at 67 to 97 (VEDPRVVGIWTKNKELELSVPKFKIDEFYVG) is interaction with WDR82. The RRM domain maps to 92–180 (DEFYVGPVPP…NIIHVELDTK (89 aa)). Disordered regions lie at residues 234–304 (GCGS…QDPT), 353–710 (GSSG…PPPA), 955–1480 (VKRK…RTGP), 1519–1624 (QLPP…STKL), and 1658–1687 (RGPWRRPPKKRHEDLVAPSASPEPSPPQPL). Composition is skewed to polar residues over residues 242–258 (VTPNSGGTPFSQDTAYS), 264–273 (TPNSYGQGTP), 281–304 (PFSQDSSYSSRQPTPSYLFSQDPT), and 353–365 (GSSGTPFKAQSQD). Over residues 366–381 (ATTFAHTPPPAQTATA) the composition is skewed to low complexity. Pro residues-rich tracts occupy residues 393–404 (TPAPPFPPPPEE), 423–433 (PAPPPLPPAEP), and 440–449 (GTPPGPPPPD). The span at 484 to 512 (EKPHDSLDSRIEMLLKEQRTKLPFLREQD) shows a compositional bias: basic and acidic residues. The span at 522–535 (SPISSSSSQLSPLS) shows a compositional bias: low complexity. The segment covering 583 to 594 (PRPPPEPGPPDP) has biased composition (pro residues). The span at 628 to 637 (EDMEISDDEM) shows a compositional bias: acidic residues. Residues 650–669 (PMVVTPGAGAVAAPNVLAPN) are compositionally biased toward low complexity. Pro residues predominate over residues 670-710 (LPLPPPPGFPPLPPPPPPPPPQPGFPMPPPLPPPPPPPPPA). 2 positions are modified to phosphoserine: S977 and S985. Residues 986–1006 (ERERDRDIADAPCELTKRDPK) are compositionally biased toward basic and acidic residues. Residue S1022 is modified to Phosphoserine. Over residues 1032-1055 (LSASSSSSASSSSGSSTTSPSSSA) the composition is skewed to low complexity. Acidic residues predominate over residues 1058–1083 (KEEEDRESTEEEEEEEEEEAEEEEEE). Positions 1087 to 1097 (SRISSPSSSSS) are enriched in low complexity. Over residues 1100-1120 (KDDEDDNEADSDGQIDSDIDD) the composition is skewed to acidic residues. Low complexity predominate over residues 1143-1178 (SITTSKAPAESSSSSSESSGSSEFESSSESESSSSS). Acidic residues predominate over residues 1179-1202 (SEDEEEMTVPGVEEEEEEEEEEEK). The segment covering 1205 to 1217 (AMAAATVVAMAEE) has biased composition (low complexity). The span at 1247 to 1261 (GTEEEVDIEAEDEVP) shows a compositional bias: acidic residues. 3 positions are modified to phosphoserine: S1283, S1301, and S1354. Positions 1331 to 1373 (EPPPMLSLPLQPPLPPPRLLRPPSPPPEPETPEPPKPPVPLEP) are enriched in pro residues. A compositionally biased stretch (low complexity) spans 1402 to 1442 (PGGEPPLSGSSSGLSLSSPQVPGSPFSYPSPSPGLSSGGLP). Basic residues predominate over residues 1535–1544 (IKRKPGRPRR). Pro residues-rich tracts occupy residues 1600-1619 (PAPPPPLPPQPPPPPPPPPV) and 1678-1687 (SPEPSPPQPL). Phosphoserine occurs at positions 1678 and 1682. The WDR5 interaction motif (WIN) signature appears at 1764–1769 (GCARSE). The tract at residues 1786–1819 (SRASTDEPPMDTQGMSIPAQPHASTRAGSERRSE) is disordered. The short motif at 1817–1822 (RSEQRR) is the RxxxRR motif element. The region spanning 1846–1963 (KKLKFCKSHI…VNEEITYDYK (118 aa)) is the SET domain. Y1962 contributes to the S-adenosyl-L-methionine binding site. Residues 1969–1985 (VKIPCLCGSENCRGTLN) enclose the Post-SET domain.

Belongs to the class V-like SAM-binding methyltransferase superfamily. In terms of assembly, component of the SET1B/COMPASS complex composed of the catalytic subunit SETD1B, WDR5, WDR82, RBBP5, ASH2L/ASH2, CXXC1/CFP1, HCFC1, DPY30 homotrimer and BOD1. Forms a core complex with the evolutionary conserved subcomplex WRAD composed of WDR5, RBBP5, ASH2L/ASH2 and DPY30 subunits; WRAD differentially stimulates the methyltransferase activity. Interacts with HCFC1 and ASH2L/ASH2. Interacts (via the RRM domain) with WDR82. Interacts (via the RRM domain) with hyperphosphorylated C-terminal domain (CTD) of RNA polymerase II large subunit (POLR2A) only in the presence of WDR82. Binds specifically to CTD heptad repeats phosphorylated on 'Ser-5' of each heptad. Interacts with RBM15. Interacts (via WIN motif) with WDR5. As to expression, widely expressed.

The protein localises to the nucleus. It is found in the nucleus speckle. The protein resides in the chromosome. Its subcellular location is the cytoplasm. The enzyme catalyses L-lysyl(4)-[histone H3] + S-adenosyl-L-methionine = N(6)-methyl-L-lysyl(4)-[histone H3] + S-adenosyl-L-homocysteine + H(+). The catalysed reaction is N(6)-methyl-L-lysyl(4)-[histone H3] + S-adenosyl-L-methionine = N(6),N(6)-dimethyl-L-lysyl(4)-[histone H3] + S-adenosyl-L-homocysteine + H(+). It catalyses the reaction N(6),N(6)-dimethyl-L-lysyl(4)-[histone H3] + S-adenosyl-L-methionine = N(6),N(6),N(6)-trimethyl-L-lysyl(4)-[histone H3] + S-adenosyl-L-homocysteine + H(+). Functionally, histone methyltransferase that catalyzes methyl group transfer from S-adenosyl-L-methionine to the epsilon-amino group of 'Lys-4' of histone H3 (H3K4) via a non-processive mechanism. Part of chromatin remodeling machinery, forms H3K4me1, H3K4me2 and H3K4me3 methylation marks at active chromatin sites where transcription and DNA repair take place. Plays an essential role in regulating the transcriptional programming of multipotent hematopoietic progenitor cells and lymphoid lineage specification during hematopoiesis. The chain is Histone-lysine N-methyltransferase SETD1B (Setd1b) from Mus musculus (Mouse).